A 179-amino-acid chain; its full sequence is Large ribosomal subunit protein uL6 (179 aa).

Belongs to the universal ribosomal protein uL6 family. In terms of assembly, part of the 50S ribosomal subunit.

Its function is as follows. This protein binds to the 23S rRNA, and is important in its secondary structure. It is located near the subunit interface in the base of the L7/L12 stalk, and near the tRNA binding site of the peptidyltransferase center. This Acaryochloris marina (strain MBIC 11017) protein is Large ribosomal subunit protein uL6.